Here is a 103-residue protein sequence, read N- to C-terminus: Cell division protein FtsB (103 aa).

Residues 1 to 3 are Cytoplasmic-facing; the sequence is MGK. The chain crosses the membrane as a helical span at residues 4 to 21; that stretch reads LTLLLLALLVWLQYSLWF. Topologically, residues 22–103 are periplasmic; it reads GKNGIHDYSR…RAATAGQTHR (82 aa). Positions 33 to 62 form a coiled coil; it reads NDDVVAQQATNAKLKARNDQLFAEIDDLNG.

Belongs to the FtsB family. Part of a complex composed of FtsB, FtsL and FtsQ.

It is found in the cell inner membrane. Functionally, essential cell division protein. May link together the upstream cell division proteins, which are predominantly cytoplasmic, with the downstream cell division proteins, which are predominantly periplasmic. This chain is Cell division protein FtsB, found in Salmonella agona (strain SL483).